The sequence spans 231 residues: Large ribosomal subunit protein uL1 (231 aa).

Belongs to the universal ribosomal protein uL1 family. As to quaternary structure, part of the 50S ribosomal subunit.

Binds directly to 23S rRNA. The L1 stalk is quite mobile in the ribosome, and is involved in E site tRNA release. Its function is as follows. Protein L1 is also a translational repressor protein, it controls the translation of the L11 operon by binding to its mRNA. The sequence is that of Large ribosomal subunit protein uL1 from Clostridium kluyveri (strain NBRC 12016).